The chain runs to 232 residues: Ribonuclease 3 (232 aa).

The 130-residue stretch at 6–135 (QDYLAKTYGI…FIGALYLDQG (130 aa)) folds into the RNase III domain. Glu-48 contributes to the Mg(2+) binding site. Residue Asp-52 is part of the active site. Residues Asp-121 and Glu-124 each contribute to the Mg(2+) site. Glu-124 is an active-site residue. The DRBM domain occupies 161-230 (DAKTSLQEFL…AKHALEKLRM (70 aa)).

It belongs to the ribonuclease III family. As to quaternary structure, homodimer. Mg(2+) serves as cofactor.

The protein resides in the cytoplasm. The enzyme catalyses Endonucleolytic cleavage to 5'-phosphomonoester.. In terms of biological role, digests double-stranded RNA. Involved in the processing of primary rRNA transcript to yield the immediate precursors to the large and small rRNAs (23S and 16S). Processes some mRNAs, and tRNAs when they are encoded in the rRNA operon. Processes pre-crRNA and tracrRNA of type II CRISPR loci if present in the organism. This chain is Ribonuclease 3, found in Limosilactobacillus fermentum (strain NBRC 3956 / LMG 18251) (Lactobacillus fermentum).